The following is an 828-amino-acid chain: Translation initiation factor IF-2 (828 aa).

Disordered stretches follow at residues 48-76 (SYSG…SEEF) and 112-148 (ASQE…ESTL). A compositionally biased stretch (polar residues) spans 49-58 (YSGSTTTLSL). Residues 65–74 (LETGSSSGSE) show a composition bias toward low complexity. Residues 116–126 (DPIEVEQEESS) show a composition bias toward acidic residues. Basic and acidic residues predominate over residues 127 to 144 (DTNKVKEEPKIEEVKDIE). In terms of domain architecture, tr-type G spans 326–496 (SRAPVVTVMG…LLIAEMQNLK (171 aa)). The interval 335–342 (GHVDHGKT) is G1. 335 to 342 (GHVDHGKT) serves as a coordination point for GTP. Positions 360–364 (GITQH) are G2. A G3 region spans residues 382 to 385 (DTPG). Residues 382–386 (DTPGH) and 436–439 (NKID) contribute to the GTP site. The G4 stretch occupies residues 436 to 439 (NKID). The interval 472–474 (SAL) is G5.

It belongs to the TRAFAC class translation factor GTPase superfamily. Classic translation factor GTPase family. IF-2 subfamily.

It is found in the cytoplasm. Its function is as follows. One of the essential components for the initiation of protein synthesis. Protects formylmethionyl-tRNA from spontaneous hydrolysis and promotes its binding to the 30S ribosomal subunits. Also involved in the hydrolysis of GTP during the formation of the 70S ribosomal complex. In Rickettsia bellii (strain OSU 85-389), this protein is Translation initiation factor IF-2.